The following is a 342-amino-acid chain: MIRADLTDIPTYVPGKNLGDALKLSSNEVAFPPLPAAVSAITEAATGANRYPDMGAVELRGVLADHLELTPEQITVGCGSSALCQQLVQATCAAGDEVIFPWRSFEAYPIFARVAGATAVPIPLLPDTQGHDLEGMLDAITDRTRLIFLCNPNNPSGTTFTEEQFEAFMQRVPADVVVGLDEAYFEFNRAEDSPVSTEAVQRYPNVIGLRTFSKAYGLAGVRVGYAFGNPELIGAMNKVAIPFAVSSLAQAAAIASLNAADELLERTEEVVTERERVAQVVGAAPSQANFVWLPGEGAAELAGRLAEHGVVIRAFPEGARITVTNAAETDRLIRAWEAVHHG.

The residue at position 214 (Lys214) is an N6-(pyridoxal phosphate)lysine.

This sequence belongs to the class-II pyridoxal-phosphate-dependent aminotransferase family. As to quaternary structure, homodimer. Requires pyridoxal 5'-phosphate as cofactor.

The catalysed reaction is an aromatic L-alpha-amino acid + 2-oxoglutarate = an aromatic oxo-acid + L-glutamate. In terms of biological role, aminotransferase that catalyzes the conversion of aromatic amino acids and 2-oxoglutarate into corresponding aromatic oxo acids and L-glutamate. The polypeptide is Aromatic amino acid aminotransferase (Corynebacterium efficiens (strain DSM 44549 / YS-314 / AJ 12310 / JCM 11189 / NBRC 100395)).